We begin with the raw amino-acid sequence, 418 residues long: Tyrosine--tRNA ligase 1 (418 aa).

Tyr34 lines the L-tyrosine pocket. Residues 39–48 (PTADSLHIGH) carry the 'HIGH' region motif. Tyr169 and Gln173 together coordinate L-tyrosine. The short motif at 230 to 234 (KFGKT) is the 'KMSKS' region element. Lys233 is an ATP binding site. An S4 RNA-binding domain is found at 352–418 (TVLIDLLVES…GKKKYFLIRY (67 aa)).

It belongs to the class-I aminoacyl-tRNA synthetase family. TyrS type 1 subfamily. Homodimer.

The protein resides in the cytoplasm. The enzyme catalyses tRNA(Tyr) + L-tyrosine + ATP = L-tyrosyl-tRNA(Tyr) + AMP + diphosphate + H(+). In terms of biological role, catalyzes the attachment of tyrosine to tRNA(Tyr) in a two-step reaction: tyrosine is first activated by ATP to form Tyr-AMP and then transferred to the acceptor end of tRNA(Tyr). This chain is Tyrosine--tRNA ligase 1, found in Bacillus cereus (strain ATCC 14579 / DSM 31 / CCUG 7414 / JCM 2152 / NBRC 15305 / NCIMB 9373 / NCTC 2599 / NRRL B-3711).